Reading from the N-terminus, the 212-residue chain is Large ribosomal subunit protein uL3 (212 aa).

Residues 147–166 form a disordered region; that stretch reads GSTGQNQSPGKVFKGKKMPG. Position 153 is an N5-methylglutamine (glutamine 153).

This sequence belongs to the universal ribosomal protein uL3 family. In terms of assembly, part of the 50S ribosomal subunit. Forms a cluster with proteins L14 and L19. Post-translationally, methylated by PrmB.

One of the primary rRNA binding proteins, it binds directly near the 3'-end of the 23S rRNA, where it nucleates assembly of the 50S subunit. This chain is Large ribosomal subunit protein uL3, found in Psychrobacter sp. (strain PRwf-1).